The following is a 313-amino-acid chain: Ribose-phosphate pyrophosphokinase (313 aa).

ATP-binding positions include 40–42 (DGE) and 98–99 (RQ). Residues H132 and D172 each contribute to the Mg(2+) site. K195 is an active-site residue. Residues R197, D221, and 225 to 229 (DTAGT) each bind D-ribose 5-phosphate.

Belongs to the ribose-phosphate pyrophosphokinase family. Class I subfamily. In terms of assembly, homohexamer. The cofactor is Mg(2+).

Its subcellular location is the cytoplasm. It carries out the reaction D-ribose 5-phosphate + ATP = 5-phospho-alpha-D-ribose 1-diphosphate + AMP + H(+). The protein operates within metabolic intermediate biosynthesis; 5-phospho-alpha-D-ribose 1-diphosphate biosynthesis; 5-phospho-alpha-D-ribose 1-diphosphate from D-ribose 5-phosphate (route I): step 1/1. Functionally, involved in the biosynthesis of the central metabolite phospho-alpha-D-ribosyl-1-pyrophosphate (PRPP) via the transfer of pyrophosphoryl group from ATP to 1-hydroxyl of ribose-5-phosphate (Rib-5-P). The chain is Ribose-phosphate pyrophosphokinase from Porphyromonas gingivalis (strain ATCC BAA-308 / W83).